A 342-amino-acid polypeptide reads, in one-letter code: L-threonine 3-dehydrogenase (342 aa).

Residue cysteine 38 coordinates Zn(2+). Catalysis depends on charge relay system residues threonine 40 and histidine 43. Zn(2+) contacts are provided by histidine 63, glutamate 64, cysteine 93, cysteine 96, cysteine 99, and cysteine 107. Residues isoleucine 175, aspartate 195, arginine 200, leucine 262–leucine 264, and isoleucine 286–tyrosine 287 contribute to the NAD(+) site.

This sequence belongs to the zinc-containing alcohol dehydrogenase family. Homotetramer. Requires Zn(2+) as cofactor.

It is found in the cytoplasm. It catalyses the reaction L-threonine + NAD(+) = (2S)-2-amino-3-oxobutanoate + NADH + H(+). It participates in amino-acid degradation; L-threonine degradation via oxydo-reductase pathway; glycine from L-threonine: step 1/2. In terms of biological role, catalyzes the NAD(+)-dependent oxidation of L-threonine to 2-amino-3-ketobutyrate. In Streptomyces avermitilis (strain ATCC 31267 / DSM 46492 / JCM 5070 / NBRC 14893 / NCIMB 12804 / NRRL 8165 / MA-4680), this protein is L-threonine 3-dehydrogenase.